The sequence spans 298 residues: Protein OS-9 homolog (298 aa).

A signal peptide spans 1 to 25; sequence MGLAGGARVVLFVVAAAAAAALTAA. N-linked (GlcNAc...) asparagine glycosylation is present at N95. The MRH domain occupies 121-246; the sequence is DQCFYRHEGW…TVQSPMLCKN (126 aa). C123 and C136 are oxidised to a cystine. The a mannooligosaccharide derivative site is built by W130, W131, and Q143. 2 N-linked (GlcNAc...) asparagine glycosylation sites follow: N171 and N197. 2 disulfide bridges follow: C201-C232 and C216-C244. D202, R208, E228, and Y234 together coordinate a mannooligosaccharide derivative.

The protein belongs to the OS-9 family. In terms of assembly, interacts with HRD3.

Its subcellular location is the endoplasmic reticulum. Lectin which functions in endoplasmic reticulum (ER) quality control and ER-associated degradation (ERAD). May bind terminally misfolded non-glycosylated proteins as well as improperly folded glycoproteins, retain them in the ER, and possibly transfer them to the ubiquitination machinery and promote their degradation. The polypeptide is Protein OS-9 homolog (Oryza sativa subsp. japonica (Rice)).